We begin with the raw amino-acid sequence, 177 residues long: Ribulose bisphosphate carboxylase small subunit, chloroplastic (177 aa).

The transit peptide at 1-55 (MASLMSNAAVVTASTAAQANMVAPFSGLKSTSAFPVSRKSNVDITSLATNGGRVN) directs the protein to the chloroplast.

The protein belongs to the RuBisCO small chain family. As to quaternary structure, heterohexadecamer of 8 large and 8 small subunits.

The protein localises to the plastid. Its subcellular location is the chloroplast. RuBisCO catalyzes two reactions: the carboxylation of D-ribulose 1,5-bisphosphate, the primary event in carbon dioxide fixation, as well as the oxidative fragmentation of the pentose substrate. Both reactions occur simultaneously and in competition at the same active site. Although the small subunit is not catalytic it is essential for maximal activity. The polypeptide is Ribulose bisphosphate carboxylase small subunit, chloroplastic (Silene latifolia subsp. alba (White campion)).